Reading from the N-terminus, the 125-residue chain is Actin, alpha skeletal muscle (125 aa).

It belongs to the actin family. In terms of assembly, polymerization of globular actin (G-actin) leads to a structural filament (F-actin) in the form of a two-stranded helix. Each actin can bind to 4 others. In terms of processing, methylated at His-75 by SETD3.

The protein localises to the cytoplasm. It is found in the cytoskeleton. In terms of biological role, actins are highly conserved proteins that are involved in various types of cell motility and are ubiquitously expressed in all eukaryotic cells. This is Actin, alpha skeletal muscle from Pleurodeles waltl (Iberian ribbed newt).